Consider the following 484-residue polypeptide: Arginine ADP-riboxanase OspC3 (484 aa).

Residues histidine 143, glutamine 144, serine 145, asparagine 155, lysine 157, threonine 169, asparagine 172, and threonine 173 each contribute to the NAD(+) site. The active site involves glutamate 326. 3 ANK repeats span residues 369-398 (MAHQ…FTKQ), 413-444 (NLYD…DVNK), and 451-480 (SGDT…ILGK).

Belongs to the OspC family. Interacts with host calmodulin (CALM1, CALM2 and/or CALM3); specifically interacts with the apo form of calmodulin, preventing calcium-binding.

Its subcellular location is the secreted. It localises to the host cytoplasm. The enzyme catalyses L-arginyl-[protein] + NAD(+) = ADP-riboxanated L-argininyl-[protein] + nicotinamide + NH4(+) + H(+). With respect to regulation, interaction with host calmodulin (CALM1, CALM2 and/or CALM3) is required to mediate arginine ADP-riboxanation of host caspases. Its function is as follows. ADP-riboxanase effector that inhibits host cell pyroptosis. Acts by mediating arginine ADP-riboxanation of host CASP4/CASP11, blocking CASP4/CASP11 autoprocessing. This prevents CASP4 activation and ability to recognize and cleave GSDMD, thereby inhibiting LPS-induced pyroptosis. ADP-riboxanation takes place in two steps: OspC3 first catalyzes ADP-ribosylation of target Arg, and then initiates a deamination to remove one N-omega group. Independently of its ADP-riboxanase activity, acts as an inhibitor of calcium signaling by inhibiting host calmodulin, preventing activation of the JAK-STAT signaling pathway in response to interferon-beta. Mechanistically, acts by binding to the apo form of calmodulin, preventing calcium-binding and ability to activate host CaMK2 (CAMKII), which is required to stimulate the JAK-STAT signaling pathway in response to interferon-beta. This Shigella flexneri protein is Arginine ADP-riboxanase OspC3.